Reading from the N-terminus, the 209-residue chain is Guanylate kinase (209 aa).

One can recognise a Guanylate kinase-like domain in the interval 7-185; sequence GNLYIVAAPS…AAMELQSIVI (179 aa). Residue 14–21 participates in ATP binding; it reads APSGGGKT.

The protein belongs to the guanylate kinase family.

The protein resides in the cytoplasm. The enzyme catalyses GMP + ATP = GDP + ADP. In terms of biological role, essential for recycling GMP and indirectly, cGMP. This chain is Guanylate kinase, found in Legionella pneumophila (strain Lens).